We begin with the raw amino-acid sequence, 147 residues long: Peptide deformylase (147 aa).

Residues C88 and H130 each contribute to the Fe cation site. The active site involves E131. H134 contributes to the Fe cation binding site.

The protein belongs to the polypeptide deformylase family. Fe(2+) serves as cofactor.

The catalysed reaction is N-terminal N-formyl-L-methionyl-[peptide] + H2O = N-terminal L-methionyl-[peptide] + formate. Its function is as follows. Removes the formyl group from the N-terminal Met of newly synthesized proteins. Requires at least a dipeptide for an efficient rate of reaction. N-terminal L-methionine is a prerequisite for activity but the enzyme has broad specificity at other positions. The protein is Peptide deformylase of Clostridium botulinum (strain Alaska E43 / Type E3).